The sequence spans 37 residues: Large ribosomal subunit protein bL36 (37 aa).

This sequence belongs to the bacterial ribosomal protein bL36 family.

The protein is Large ribosomal subunit protein bL36 of Thermobifida fusca (strain YX).